Here is a 382-residue protein sequence, read N- to C-terminus: uncharacterized protein (382 aa).

12 helical membrane passes run 8-28, 45-65, 75-95, 102-122, 131-151, 157-177, 204-224, 231-251, 270-290, 291-311, 325-345, and 349-369; these read VMLL…LNTL, MVSS…GYLI, YLAS…VGFW, FIAG…LMCS, LLAA…LLVS, LLHV…PLLF, LGVN…GLMP, GMAN…GILG, VQVF…AMAP, ALFI…AWAC, ALLL…AMLM, and SDNL…LMLL.

Belongs to the major facilitator superfamily. YcaD (TC 2.A.1.26) family.

It is found in the cell inner membrane. This is an uncharacterized protein from Salmonella enteritidis PT4 (strain P125109).